The sequence spans 173 residues: Bifunctional protein PyrR (173 aa).

The PRPP-binding signature appears at 93 to 105; the sequence is VILVDDVLYTGRT.

This sequence belongs to the purine/pyrimidine phosphoribosyltransferase family. PyrR subfamily. Homodimer and homohexamer; in equilibrium.

It carries out the reaction UMP + diphosphate = 5-phospho-alpha-D-ribose 1-diphosphate + uracil. In terms of biological role, regulates transcriptional attenuation of the pyrimidine nucleotide (pyr) operon by binding in a uridine-dependent manner to specific sites on pyr mRNA. This disrupts an antiterminator hairpin in the RNA and favors formation of a downstream transcription terminator, leading to a reduced expression of downstream genes. Its function is as follows. Also displays a weak uracil phosphoribosyltransferase activity which is not physiologically significant. This is Bifunctional protein PyrR from Streptococcus pneumoniae (strain 70585).